We begin with the raw amino-acid sequence, 65 residues long: Large ribosomal subunit protein uL29 (65 aa).

Belongs to the universal ribosomal protein uL29 family.

The chain is Large ribosomal subunit protein uL29 from Acidithiobacillus ferrooxidans (strain ATCC 23270 / DSM 14882 / CIP 104768 / NCIMB 8455) (Ferrobacillus ferrooxidans (strain ATCC 23270)).